The following is an 858-amino-acid chain: Gamma-secretase-activating protein (858 aa).

The protein belongs to the GSAP family. Interacts with APP; specifically interacts with the CTF-alpha product of APP. Interacts with the gamma-secretase complex. Post-translationally, the protein is first synthesized as a holoprotein form of 98 kDa and rapidly processed into the gamma-secretase-activating protein 16 kDa C-terminal form, which constitutes the predominant form.

The protein localises to the golgi apparatus. It localises to the trans-Golgi network. Regulator of gamma-secretase activity, which specifically activates the production of amyloid-beta protein (amyloid-beta protein 40 and amyloid-beta protein 42), without affecting the cleavage of other gamma-secretase targets such has Notch. The gamma-secretase complex is an endoprotease complex that catalyzes the intramembrane cleavage of integral membrane proteins such as Notch receptors and APP (amyloid-beta precursor protein). Specifically promotes the gamma-cleavage of APP CTF-alpha (also named APP-CTF) by the gamma-secretase complex to generate amyloid-beta, while it reduces the epsilon-cleavage of APP CTF-alpha, leading to a low production of AICD. This chain is Gamma-secretase-activating protein (Gsap), found in Mus musculus (Mouse).